The following is a 314-amino-acid chain: Homoserine O-acetyltransferase (314 aa).

Residue Cys-142 is the Acyl-thioester intermediate of the active site. 2 residues coordinate substrate: Lys-163 and Ser-192. His-235 acts as the Proton acceptor in catalysis. The active site involves Glu-237. Arg-249 contacts substrate.

It belongs to the MetA family.

Its subcellular location is the cytoplasm. It carries out the reaction L-homoserine + acetyl-CoA = O-acetyl-L-homoserine + CoA. Its pathway is amino-acid biosynthesis; L-methionine biosynthesis via de novo pathway; O-acetyl-L-homoserine from L-homoserine: step 1/1. Transfers an acetyl group from acetyl-CoA to L-homoserine, forming acetyl-L-homoserine. This chain is Homoserine O-acetyltransferase, found in Streptococcus pneumoniae (strain JJA).